The sequence spans 608 residues: Glutamine--fructose-6-phosphate aminotransferase [isomerizing] (608 aa).

The active-site Nucleophile; for GATase activity is Cys2. The 216-residue stretch at 2 to 217 (CGIVGYIGDK…DHEIAIIKKD (216 aa)) folds into the Glutamine amidotransferase type-2 domain. 2 consecutive SIS domains span residues 285–424 (TKED…KKGT) and 453–598 (VIQK…VDKP). Catalysis depends on Lys603, which acts as the For Fru-6P isomerization activity.

As to quaternary structure, homodimer.

It localises to the cytoplasm. The catalysed reaction is D-fructose 6-phosphate + L-glutamine = D-glucosamine 6-phosphate + L-glutamate. Functionally, catalyzes the first step in hexosamine metabolism, converting fructose-6P into glucosamine-6P using glutamine as a nitrogen source. The protein is Glutamine--fructose-6-phosphate aminotransferase [isomerizing] of Caldanaerobacter subterraneus subsp. tengcongensis (strain DSM 15242 / JCM 11007 / NBRC 100824 / MB4) (Thermoanaerobacter tengcongensis).